The chain runs to 667 residues: MKFINGILFNENFKDFYSNFKNPFGESEFVFGSAVNEILKTQNRVIVAELGFGLGRNFLNIAAKFKNSDKILHFVSIEKFPLQKEILAKFYENFKFEGAKKLLKLYPTLESGFHRIKFSKNITLDLLFGDAECVLKECEFKADIWLMDGFSPSKNPDMWSDEITSQIARLCRIKAKIATYSASKKVQKSLENAGFCVVKTPGFNGKREMIRAYFNGNSGEIKDYFFERPSFKSGKNVLIIGAGIAGIVTAIKFQNLGYKTVIAEKACSVAANASGNFCGVLEPLITKKGVKLGEMHKYAFKMAVKFYKKNVPKNLAKFCGAKEFAYNDDILKRFETHDKSEIFDFNRKDLPYASIFIKNAALLRPRKICEFFSKKLNIKFGYEFSDFVESNGGYIVNFVGKKPLKCDILIFAMGSESEELFGGGKNVRANFDDAMQISSVRGQITLLRPFLKTPIPLGARGYICPKIGKRQLIGATYDRKDYENQARTFDDERNLQNVAELLNKNFVKNTDTRNLNDKKFKFEILDKNVDFNVSKQNLNFKMHTQNKELAFKNQILNVKILGSRVGFRGYSGDRFPLIGALPDCEYFKEKYKILPWQKNRAKNLPPKYLKNIYINTSHGARGLCTAILGAEILADLVTNRPFCLPKSLINELAPSRFLIRKLKKGLK.

The tract at residues 1–215 is tRNA (mnm(5)s(2)U34)-methyltransferase; that stretch reads MKFINGILFN…KREMIRAYFN (215 aa). Residues 240–667 form an FAD-dependent cmnm(5)s(2)U34 oxidoreductase region; it reads IGAGIAGIVT…LIRKLKKGLK (428 aa).

It in the N-terminal section; belongs to the methyltransferase superfamily. tRNA (mnm(5)s(2)U34)-methyltransferase family. In the C-terminal section; belongs to the DAO family. The cofactor is FAD.

Its subcellular location is the cytoplasm. The catalysed reaction is 5-aminomethyl-2-thiouridine(34) in tRNA + S-adenosyl-L-methionine = 5-methylaminomethyl-2-thiouridine(34) in tRNA + S-adenosyl-L-homocysteine + H(+). Functionally, catalyzes the last two steps in the biosynthesis of 5-methylaminomethyl-2-thiouridine (mnm(5)s(2)U) at the wobble position (U34) in tRNA. Catalyzes the FAD-dependent demodification of cmnm(5)s(2)U34 to nm(5)s(2)U34, followed by the transfer of a methyl group from S-adenosyl-L-methionine to nm(5)s(2)U34, to form mnm(5)s(2)U34. The polypeptide is tRNA 5-methylaminomethyl-2-thiouridine biosynthesis bifunctional protein MnmC (Campylobacter hominis (strain ATCC BAA-381 / DSM 21671 / CCUG 45161 / LMG 19568 / NCTC 13146 / CH001A)).